Here is a 413-residue protein sequence, read N- to C-terminus: Transcription factor E2F4 (413 aa).

Residues 1–20 (MAEAGPQAPPPPGTPSRHEK) are disordered. Position 2 is an N-acetylalanine (Ala2). The DNA-binding element occupies 16–85 (SRHEKSLGLL…KNSIQWKGVG (70 aa)). Residues 43 to 65 (LKLAADTLAVRQKRRIYDITNVL) are leucine-zipper. The DEF box motif lies at 48-85 (DTLAVRQKRRIYDITNVLEGIGLIEKKSKNSIQWKGVG). Positions 86-181 (PGCNTREIAD…GLNGQKKYQI (96 aa)) are dimerization. The interval 211–340 (PPEDLLQSPS…PSTSFEPIKA (130 aa)) is disordered. Composition is skewed to polar residues over residues 234–249 (AQSQ…QLTP) and 293–306 (TLDT…ALLD). The span at 307 to 327 (SSSSSSSSSSSSSNSNSSSSS) shows a compositional bias: low complexity. The tract at residues 337-413 (PIKADPTGVL…DLFDVPVLNL (77 aa)) is transactivation. Ser384 carries the post-translational modification Phosphoserine. An HCFC1-binding-motif (HBM) motif is present at residues 389-392 (DHDY). The segment at 390 to 407 (HDYIYNLDESEGVCDLFD) is interaction with RBL1 and RBL2.

Belongs to the E2F/DP family. As to quaternary structure, component of the DRTF1/E2F transcription factor complex. Binds cooperatively with TFDP1/Dp-1 to E2F sites. The E2F4/TFDP1 dimer interacts preferentially with pocket protein RBL1, which inhibits the E2F transactivation domain. Lower affinity interaction has been found with retinoblastoma protein RB1. Interacts with TRRAP, which probably mediates its interaction with histone acetyltransferase complexes, leading to transcription activation. Interacts with HCFC1. Component of the DREAM complex (also named LINC complex) at least composed of E2F4, E2F5, LIN9, LIN37, LIN52, LIN54, MYBL1, MYBL2, RBL1, RBL2, RBBP4, TFDP1 and TFDP2. The complex exists in quiescent cells where it represses cell cycle-dependent genes. It dissociates in S phase when LIN9, LIN37, LIN52 and LIN54 form a subcomplex that binds to MYBL2. Interacts with PML (isoform PML-1, isoform PML-2, isoform PML-3, isoform PML-4 and isoform PML-5). Interacts with CEBPA (when phosphorylated). Post-translationally, differentially phosphorylated in vivo. In terms of tissue distribution, found in all tissue examined including heart, brain, placenta, lung, liver, skeletal muscle, kidney and pancreas.

The protein localises to the nucleus. Transcription activator that binds DNA cooperatively with DP proteins through the E2 recognition site, 5'-TTTC[CG]CGC-3' found in the promoter region of a number of genes whose products are involved in cell cycle regulation or in DNA replication. The DRTF1/E2F complex functions in the control of cell-cycle progression from G1 to S phase. E2F4 binds with high affinity to RBL1 and RBL2. In some instances can also bind RB1. Specifically required for multiciliate cell differentiation: together with MCIDAS and E2F5, binds and activate genes required for centriole biogenesis. This is Transcription factor E2F4 (E2F4) from Homo sapiens (Human).